Reading from the N-terminus, the 552-residue chain is Putative phosphate permease MT2339 (552 aa).

A run of 13 helical transmembrane segments spans residues 38-58 (WHLS…WWAF), 69-89 (ILVL…GNDV), 107-127 (ALLV…GDVT), 146-166 (DFMN…LFAN), 178-198 (IIGG…QGGA), 213-233 (VSWV…YGVI), 326-346 (VPLV…FKGF), 360-380 (FIIA…AKTL), 389-409 (TFLM…FSHG), 437-457 (AVPA…LWFI), 472-492 (MHPA…MGAT), 493-513 (VLGL…GVGI), and 526-546 (IVLA…VGLV).

This sequence belongs to the inorganic phosphate transporter (PiT) (TC 2.A.20) family.

It localises to the cell membrane. In terms of biological role, potential transporter for phosphate. The sequence is that of Putative phosphate permease MT2339 from Mycobacterium tuberculosis (strain CDC 1551 / Oshkosh).